Here is a 367-residue protein sequence, read N- to C-terminus: Oleoyl-acyl carrier protein thioesterase 2, chloroplastic (367 aa).

The transit peptide at 1–48 directs the protein to the chloroplast; it reads MLKLSCNVTDHIHNLFSNSRRIFVPVHRQTRPISCFQLKKEPLRAILS. Catalysis depends on residues asparagine 263, histidine 265, and cysteine 300.

It belongs to the acyl-ACP thioesterase family.

The protein resides in the plastid. The protein localises to the chloroplast. It catalyses the reaction (9Z)-octadecenoyl-[ACP] + H2O = (9Z)-octadecenoate + holo-[ACP] + H(+). In terms of biological role, plays an essential role in chain termination during de novo fatty acid synthesis. Possesses high thioesterase activity for oleoyl-ACP versus other acyl-ACPs. The sequence is that of Oleoyl-acyl carrier protein thioesterase 2, chloroplastic (FATA2) from Arabidopsis thaliana (Mouse-ear cress).